The sequence spans 389 residues: Alanine racemase TOXG (389 aa).

At Lys-235 the chain carries N6-(pyridoxal phosphate)lysine.

The protein belongs to the threonine aldolase family. The cofactor is pyridoxal 5'-phosphate.

It carries out the reaction L-alanine = D-alanine. The protein operates within mycotoxin biosynthesis; HC-toxin biosynthesis. In terms of biological role, alanine racemase, part of the diffuse TOX2 gene cluster that mediates the biosynthesis of the HC-toxin, cyclic tetrapeptide of structure cyclo(D-Pro-L-Ala-D-Ala-L-Aeo), where Aeo stands for 2-amino-9,10-epoxi-8-oxodecanoic acid. HC-toxin is a determinant of specificity and virulence in the interaction between the producing fungus and its host, maize. TOXG catalyzes the conversion of L-alanine into D-alanine, an essential precursor for the production of the major forms of HC-toxin by the non-ribosomal peptide synthetase HTS1. This Cochliobolus carbonum (Maize leaf spot fungus) protein is Alanine racemase TOXG.